A 397-amino-acid polypeptide reads, in one-letter code: Tryptophan synthase beta chain (397 aa).

Residue Lys86 is modified to N6-(pyridoxal phosphate)lysine.

Belongs to the TrpB family. Tetramer of two alpha and two beta chains. Pyridoxal 5'-phosphate serves as cofactor.

It carries out the reaction (1S,2R)-1-C-(indol-3-yl)glycerol 3-phosphate + L-serine = D-glyceraldehyde 3-phosphate + L-tryptophan + H2O. The protein operates within amino-acid biosynthesis; L-tryptophan biosynthesis; L-tryptophan from chorismate: step 5/5. In terms of biological role, the beta subunit is responsible for the synthesis of L-tryptophan from indole and L-serine. This Aeromonas salmonicida (strain A449) protein is Tryptophan synthase beta chain.